We begin with the raw amino-acid sequence, 552 residues long: Gamma-aminobutyric acid receptor subunit alpha-4 (552 aa).

Positions 1-35 (MVSVQKVPAIALCSGVSLALLHFLCLAACLNESPG) are cleaved as a signal peptide. Residues 36–259 (QNSKDEKLCP…FHLRRKMGYF (224 aa)) are Extracellular-facing. Asn-47 carries an N-linked (GlcNAc...) asparagine glycan. A 4-aminobutanoate-binding site is contributed by Arg-100. N-linked (GlcNAc...) asparagine glycosylation is found at Asn-144 and Asn-157. Thr-163 is a binding site for 4-aminobutanoate. Cys-172 and Cys-186 are disulfide-bonded. A helical membrane pass occupies residues 260-280 (MIQTYIPCIMTVILSQVSFWI). The Cytoplasmic segment spans residues 281-284 (NKES). Residues 285–305 (VPARTVFGITTVLTMTTLSIS) traverse the membrane as a helical segment. The Extracellular portion of the chain corresponds to 306-318 (ARHSLPKVSYATA). The chain crosses the membrane as a helical span at residues 319 to 341 (MDWFIAVCFAFVFSALIEFAAVN). Topologically, residues 342 to 515 (YFTNIQMQKA…PPPSGSGTSK (174 aa)) are cytoplasmic. Disordered regions lie at residues 353-480 (KKIS…FGSR) and 492-513 (GAAG…GSGT). Positions 396-406 (SESDVKSRTEV) are enriched in basic and acidic residues. The span at 407-422 (GNHSSKTSAVQESSEA) shows a compositional bias: polar residues. A compositionally biased stretch (low complexity) spans 445-458 (SAAARGLSSAASPS). Positions 500–509 (TPPPPAPPPS) are enriched in pro residues. A helical transmembrane segment spans residues 516–538 (IDKYARILFPVTFGAFNMVYWVV). Residues 539–552 (YLSKDTMEKSESLM) are Extracellular-facing.

Belongs to the ligand-gated ion channel (TC 1.A.9) family. Gamma-aminobutyric acid receptor (TC 1.A.9.5) subfamily. GABRA4 sub-subfamily. As to quaternary structure, heteropentamer, formed by a combination of alpha (GABRA1-6), beta (GABRB1-3), gamma (GABRG1-3), delta (GABRD), epsilon (GABRE), rho (GABRR1-3), pi (GABRP) and theta (GABRQ) chains, each subunit exhibiting distinct physiological and pharmacological properties. As to expression, expressed in the brain.

Its subcellular location is the cell membrane. The protein localises to the postsynaptic cell membrane. It carries out the reaction chloride(in) = chloride(out). Potentiated by gaboxadol. Potentiated by histamine. Alpha subunit of the heteropentameric ligand-gated chloride channel gated by gamma-aminobutyric acid (GABA), a major inhibitory neurotransmitter in the brain. GABA-gated chloride channels, also named GABA(A) receptors (GABAAR), consist of five subunits arranged around a central pore and contain GABA active binding site(s) located at the alpha and beta subunit interface(s). Alpha-4/GABRA4 subunit often assembles with delta or gamma-2 subunits, in combination with beta subunits. When activated by GABA, GABAARs selectively allow the flow of chloride anions across the cell membrane down their electrochemical gradient. GABAARs containing alpha-4 are predominantly extrasynaptic, contributing to tonic inhibition in dentate granule cells and thalamic relay neurons. Extrasynaptic alpha-4-containing GABAARs control levels of excitability and network activity. GABAAR containing alpha-4-beta-3-delta subunits can simultaneously bind GABA and histamine where histamine binds at the interface of two neighboring beta subunits, which may be involved in the regulation of sleep and wakefulness. This is Gamma-aminobutyric acid receptor subunit alpha-4 from Mus musculus (Mouse).